We begin with the raw amino-acid sequence, 127 residues long: Trefoil factor 2 (127 aa).

The N-terminal stretch at 1 to 21 (EPQRPAPGHPPPAGAVCLTGA) is a signal peptide. Gln22 carries the post-translational modification Pyrrolidone carboxylic acid. P-type domains lie at 27–71 (CRCS…FKPL) and 77–120 (EECV…FFPM). Cystine bridges form between Cys27–Cys125, Cys29–Cys56, Cys40–Cys55, Cys50–Cys67, Cys79–Cys105, Cys89–Cys104, and Cys99–Cys116.

In terms of tissue distribution, found in pancreas.

The protein localises to the secreted. Functionally, inhibits gastrointestinal motility and gastric acid secretion. Could function as a structural component of gastric mucus, possibly by stabilizing glycoproteins in the mucus gel through interactions with carbohydrate side chains. This chain is Trefoil factor 2 (TFF2), found in Sus scrofa (Pig).